We begin with the raw amino-acid sequence, 2948 residues long: MGNENSTSDNQRTLSAQTPRSAQPPGNSQNIKRKQQDTPGSPDHRDASSIGSVGLGGFCTASESSASLDPCLVSPEVTEPRKDPQGARGPEGSLLPSPPPSQEREHPSSSMPFAECPPEGCLASPAAAPEDGPQTQSPRREPAPNAPGDIAAAFPAERDSSTPYQEIAAVPSAGRERQPKEEGQKSSFSFSSGIDQSPGMSPVPLREPMKAPLCGEGDQPGGFESQEKEAAGGFPPAESRQGVASVQVTPEAPAAAQQGTESSAVLEKSPLKPMAPIPQDPAPRASDRERGQGEAPPQYLTDDLEFLRACHLPRSNSGAAPEAEVNAASQESCQQPVGAYLPHAELPWGLPSPALVPEAGGSGKEALDTIDVQGHPQTGMRGTKPNQVVCVAAGGQPEGGLPVSPEPSLLTPTEEAHPASSLASFPAAQIPIAVEEPGSSSRESVSKAGMPVSADAAKEVVDAGLVGLERQVSDLGSKGEHPEGDPGEVPAPSPQERGEHLNTEQSHEVQPGVPPPPLPKEQSHEVQPGAPPPPLPKAPSESARGPPGPTDGAKVHEDSTSPAVAKEGSRSPGDSPGGKEEAPEPPDGGDPGNLQGEDSQAFSSKRDPEVGKDELSKPSSDAESRDHPSSHSAQPPRKGGAGHTDGPHSQTAEADASGLPHKLGEEDPVLPPVPDGAGEPTVPEGAIWEGSGLQPKCPDTLQSREGLGRMESFLTLESEKSDFPPTPVAEVAPKAQEGESTLEIRKMGSCDGEGLLTSPDQPRGPACDASRQEFHAGVPHPPQGENLAADLGLTALILDQDQQGIPSCPGEGWIRGAASEWPLLSSEKHLQPSQAQPETSIFDVLKEQAQPPENGKETSPSHPGFKDQGADSSQIHVPVEPQEDNNLPTHGGQEQALGSELQSQLPKGTLSDTPTSSPTDMVWESSLTEESELSAPTRQKLPALGEKRPEGACGDGQSSRVSPPAADVLKDFSLAGNFSRKETCCTGQGPNKSQQALADALEEGSQHEEACQRHPGASEAADGCSPLWGLSKREMASGNTGEAPPCQPDSVALLDAVPCLPALAPASPGVTPTQDAPETEACDETQEGRQQPVPAPQQKMECWATSDAESPKLLASFPSAGEQGGEAGAAETGGSAGAGDPGKQQAPEKPGEATLSCGLLQTEHCLTSGEEASTSALRESCQAEHPMASCQDALLPARELGGIPRSTMDFSTHQAVPDPKELLLSGPPEVAAPDTPYLHVDSAAQRGAEDSGVKAVSSADPRAPGESPCPVGEPPLALENAASLKLFAGSLAPLLQPGAAGGEIPAVQASSGSPKARTTEGPVDSMPCLDRMPLLAKGKQATGEEKAATAPGAGAKASGEGMAGDAAGETEGSMERMGEPSQDPKQGTSGGVDTSSEQIATLTGFPDFREHIAKIFEKPVLGALATPGEKAGAGRSAVGKDLTRPLGPEKLLDGPPGVDVTLLPAPPARLQVEKKQQLAGEAEISHLALQDPASDKLLGPAGLTWERNLPGAGVGKEMAGVPPTLREDERPEGPGAAWPGLEGQAYSQLERSRQELASGLPSPAATQELPVERAAAFQVAPHSHGEEAVAQDRIPSGKQHQETSACDSPHGEDGPGDFAHTGVPGHVPRSTCAPSPQREVLTVPEANSEPWTLDTLGGERRPGVTAGILEMRNALGNQSTPAPPTGEVADTPLEPGKVAGAAGEAEGDITLSTAETQACASGDLPEAGTTRTFSVVAGDLVLPGSCQDPACSDKAPGMEGTAALHGDSPARPQQAKEQPGPERPIPAGDGKVCVSSPPEPDETHDPKLQHLAPEELHTDRESPRPGPSMLPSVPKKDAPRVMDKVTSDETRGAEGTESSPVADDIIQPAAPADLESPTLAASSYHGDVVGQVSTDLIAQSISPAAAHAGLPPSAAEHIVSPSAPAGDRVEASTPSCPDPAKDLSRSSDSEEAFETPESTTPVKAPPAPPPPPPEVIPEPEVSTQPPPEEPGCGSETVPVPDGPRSDSVEGSPFRPPSHSFSAVFDEDKPIASSGTYNLDFDNIELVDTFQTLEPRASDAKNQEGKVNTRRKSTDSVPISKSTLSRSLSLQASDFDGASSSGNPEAVALAPDAYSTGSSSASSTLKRTKKPRPPSLKKKQTTKKPTETPPVKETQQEPDEESLVPSGENLASETKTESAKTEGPSPALLEETPLEPAVGPKAACPLDSESAEGVVPPASGGGRVQNSPPVGRKTLPLTTAPEAGEVTPSDSGGQEDSPAKGLSVRLEFDYSEDKSSWDNQQENPPPTKKIGKKPVAKMPLRRPKMKKTPEKLDNTPASPPRSPAEPNDIPIAKGTYTFDIDKWDDPNFNPFSSTSKMQESPKLPQQSYNFDPDTCDESVDPFKTSSKTPSSPSKSPASFEIPASAMEANGVDGDGLNKPAKKKKTPLKTDTFRVKKSPKRSPLSDPPSQDPTPAATPETPPVISAVVHATDEEKLAVTNQKWTCMTVDLEADKQDYPQPSDLSTFVNETKFSSPTEELDYRNSYEIEYMEKIGSSLPQDDDAPKKQALYLMFDTSQESPVKSSPVRMSESPTPCSGSSFEETEALVNTAAKNQHPVPRGLAPNQESHLQVPEKSSQKELEAMGLGTPSEAIEITAPEGSFASADALLSRLAHPVSLCGALDYLEPDLAEKNPPLFAQKLQEELEFAIMRIEALKLARQIALASRSHQDAKREAAHPTDVSISKTALYSRIGTAEVEKPAGLLFQQPDLDSALQIARAEIITKEREVSEWKDKYEESRREVMEMRKIVAEYEKTIAQMIEDEQREKSVSHQTVQQLVLEKEQALADLNSVEKSLADLFRRYEKMKEVLEGFRKNEEVLKRCAQEYLSRVKKEEQRYQALKVHAEEKLDRANAEIAQVRGKAQQEQAAHQASLRKEQLRVDALERTLEQKNKEIEELTKICDELIAKMGKS.

Over residues 1 to 30 the composition is skewed to polar residues; it reads MGNENSTSDNQRTLSAQTPRSAQPPGNSQN. Disordered regions lie at residues 1-304, 314-333, 392-453, 465-785, 825-964, 985-1050, 1062-1154, 1243-1274, 1296-1400, 1427-1463, 1493-1661, 1675-1705, 1741-1878, 1907-2035, and 2052-2460; these read MGNE…TDDL, RSNS…QESC, AAGG…MPVS, LVGL…PQGE, SSEK…VSPP, CTGQ…QPDS, ALAP…GEAT, AAQR…VGEP, QPGA…EQIA, PGEK…VTLL, ASDK…GERR, LGNQ…AGEA, VLPG…ESPT, HAGL…SSGT, and LEPR…ETPP. Residues 174–184 show a composition bias toward basic and acidic residues; that stretch reads GRERQPKEEGQ. Phosphoserine occurs at positions 197, 201, and 269. Val325 bears the Phosphothreonine mark. Ser493 carries the post-translational modification Phosphoserine. Residues 496–507 show a composition bias toward basic and acidic residues; that stretch reads ERGEHLNTEQSH. 3 positions are modified to phosphoserine: Ser561, Ser571, and Ser575. A compositionally biased stretch (basic and acidic residues) spans 604 to 629; that stretch reads SKRDPEVGKDELSKPSSDAESRDHPS. The residue at position 758 (Ser758) is a Phosphoserine. The segment covering 911 to 926 has biased composition (low complexity); that stretch reads SDTPTSSPTDMVWESS. At Ser962 the chain carries Phosphoserine. The span at 985-996 shows a compositional bias: polar residues; it reads CTGQGPNKSQQA. Ser1025 is subject to Phosphoserine. Phosphoserine occurs at positions 1267 and 1313. The segment covering 1348 to 1357 has biased composition (low complexity); sequence ATAPGAGAKA. Over residues 1383–1400 the composition is skewed to polar residues; that stretch reads DPKQGTSGGVDTSSEQIA. A Phosphoserine modification is found at Ser1562. Basic and acidic residues-rich tracts occupy residues 1801 to 1823 and 1834 to 1854; these read DETH…RESP and PKKD…RGAE. The segment covering 1862-1873 has biased composition (low complexity); the sequence is ADDIIQPAAPAD. A compositionally biased stretch (basic and acidic residues) spans 1939 to 1948; sequence PAKDLSRSSD. A compositionally biased stretch (pro residues) spans 1963-1976; that stretch reads KAPPAPPPPPPEVI. Phosphoserine is present on Ser2072. The segment covering 2074–2102 has biased composition (polar residues); it reads DSVPISKSTLSRSLSLQASDFDGASSSGN. Residues 2114–2124 show a composition bias toward low complexity; sequence STGSSSASSTL. Over residues 2125-2141 the composition is skewed to basic residues; sequence KRTKKPRPPSLKKKQTT. Phosphoserine occurs at positions 2161 and 2226. A Phosphothreonine modification is found at Thr2246. Position 2256 is a phosphoserine (Ser2256). Positions 2265 to 2275 are enriched in basic and acidic residues; the sequence is LEFDYSEDKSS. A compositionally biased stretch (basic residues) spans 2288 to 2305; that stretch reads KIGKKPVAKMPLRRPKMK. One can recognise an SPAZ domain in the interval 2315–2403; it reads PASPPRSPAE…SPASFEIPAS (89 aa). 7 positions are modified to phosphoserine: Ser2317, Ser2321, Ser2359, Ser2389, Ser2392, Ser2394, and Ser2403. The segment covering 2348–2368 has biased composition (polar residues); that stretch reads NPFSSTSKMQESPKLPQQSYN. A compositionally biased stretch (low complexity) spans 2382 to 2395; that stretch reads KTSSKTPSSPSKSP. Thr2430, Thr2451, Thr2455, and Thr2458 each carry phosphothreonine. A phosphoserine mark is found at Ser2512 and Ser2534. The residue at position 2553 (Thr2553) is a Phosphothreonine. The disordered stretch occupies residues 2555 to 2577; sequence QESPVKSSPVRMSESPTPCSGSS. Phosphoserine occurs at positions 2557 and 2569. A compositionally biased stretch (polar residues) spans 2568–2577; the sequence is ESPTPCSGSS. Position 2625 is a phosphothreonine (Thr2625). 2 coiled-coil regions span residues 2675–2703 and 2746–2947; these read AQKL…LASR and DLDS…KMGK.

This sequence belongs to the TACC family. In terms of assembly, interacts with CCDC100/CEP120. Interacts with microtubules. Interacts with YEATS4, GCN5L2 and PCAF. In terms of processing, phosphorylated by TTK; which is required for localization in centrosome. In terms of tissue distribution, strongly expressed in heart, skeletal muscle, brain, prostate, thyroid and trachea.

It is found in the cytoplasm. The protein localises to the nucleus. Its subcellular location is the cytoskeleton. It localises to the microtubule organizing center. The protein resides in the centrosome. Functionally, plays a role in the microtubule-dependent coupling of the nucleus and the centrosome. Involved in the processes that regulate centrosome-mediated interkinetic nuclear migration (INM) of neural progenitors. May play a role in organizing centrosomal microtubules. May act as a tumor suppressor protein. May represent a tumor progression marker. This chain is Transforming acidic coiled-coil-containing protein 2 (TACC2), found in Homo sapiens (Human).